The sequence spans 164 residues: Protein-export protein SecB (164 aa).

The segment covering 1 to 12 has biased composition (basic and acidic residues); that stretch reads MPDKDEITHDAQ. The interval 1–22 is disordered; the sequence is MPDKDEITHDAQSENEESLPLA.

This sequence belongs to the SecB family. As to quaternary structure, homotetramer, a dimer of dimers. One homotetramer interacts with 1 SecA dimer.

The protein localises to the cytoplasm. One of the proteins required for the normal export of preproteins out of the cell cytoplasm. It is a molecular chaperone that binds to a subset of precursor proteins, maintaining them in a translocation-competent state. It also specifically binds to its receptor SecA. The polypeptide is Protein-export protein SecB (Neorickettsia sennetsu (strain ATCC VR-367 / Miyayama) (Ehrlichia sennetsu)).